We begin with the raw amino-acid sequence, 514 residues long: 1-pyrroline-5-carboxylate dehydrogenase (514 aa).

Catalysis depends on residues Glu-286 and Cys-320.

The protein belongs to the aldehyde dehydrogenase family. RocA subfamily.

The catalysed reaction is L-glutamate 5-semialdehyde + NAD(+) + H2O = L-glutamate + NADH + 2 H(+). The protein operates within amino-acid degradation; L-proline degradation into L-glutamate; L-glutamate from L-proline: step 2/2. This Staphylococcus saprophyticus subsp. saprophyticus (strain ATCC 15305 / DSM 20229 / NCIMB 8711 / NCTC 7292 / S-41) protein is 1-pyrroline-5-carboxylate dehydrogenase.